Here is a 295-residue protein sequence, read N- to C-terminus: Ribosomal RNA small subunit methyltransferase A (295 aa).

Positions 33, 35, 60, 81, 111, and 129 each coordinate S-adenosyl-L-methionine.

Belongs to the class I-like SAM-binding methyltransferase superfamily. rRNA adenine N(6)-methyltransferase family. RsmA subfamily.

The protein localises to the cytoplasm. The catalysed reaction is adenosine(1518)/adenosine(1519) in 16S rRNA + 4 S-adenosyl-L-methionine = N(6)-dimethyladenosine(1518)/N(6)-dimethyladenosine(1519) in 16S rRNA + 4 S-adenosyl-L-homocysteine + 4 H(+). Specifically dimethylates two adjacent adenosines (A1518 and A1519) in the loop of a conserved hairpin near the 3'-end of 16S rRNA in the 30S particle. May play a critical role in biogenesis of 30S subunits. This chain is Ribosomal RNA small subunit methyltransferase A, found in Streptomyces avermitilis (strain ATCC 31267 / DSM 46492 / JCM 5070 / NBRC 14893 / NCIMB 12804 / NRRL 8165 / MA-4680).